A 359-amino-acid polypeptide reads, in one-letter code: Histidinol-phosphate aminotransferase (359 aa).

Residue Lys212 is modified to N6-(pyridoxal phosphate)lysine.

It belongs to the class-II pyridoxal-phosphate-dependent aminotransferase family. Histidinol-phosphate aminotransferase subfamily. Homodimer. The cofactor is pyridoxal 5'-phosphate.

It catalyses the reaction L-histidinol phosphate + 2-oxoglutarate = 3-(imidazol-4-yl)-2-oxopropyl phosphate + L-glutamate. It participates in amino-acid biosynthesis; L-histidine biosynthesis; L-histidine from 5-phospho-alpha-D-ribose 1-diphosphate: step 7/9. This Buchnera aphidicola subsp. Melaphis rhois protein is Histidinol-phosphate aminotransferase.